Reading from the N-terminus, the 172-residue chain is R-phycocyanin-2 beta chain (172 aa).

Asn-72 bears the N4-methylasparagine mark. Cys-82 contributes to the (2R,3E)-phycocyanobilin binding site. Cys-153 is a binding site for (2R,3E)-phycoerythrobilin.

Belongs to the phycobiliprotein family. Heterodimer of an alpha and a beta chain. In terms of processing, contains two covalently linked bilin chromophores.

It is found in the cellular thylakoid membrane. Light-harvesting photosynthetic bile pigment-protein from the phycobiliprotein complex. The chain is R-phycocyanin-2 beta chain (rpcB) from Synechococcus sp. (strain WH8103).